Reading from the N-terminus, the 527-residue chain is Pentatricopeptide repeat-containing protein At4g25270, chloroplastic (527 aa).

The transit peptide at 1-47 directs the protein to the chloroplast; the sequence is MVSIVVHKPSFSYPSVSSSSMKKKPRHHQQLKQHRQNQYNNNGFTSL. Residues 12–44 form a disordered region; that stretch reads SYPSVSSSSMKKKPRHHQQLKQHRQNQYNNNGF. Over residues 21 to 35 the composition is skewed to basic residues; sequence MKKKPRHHQQLKQHR. 10 PPR repeats span residues 126–156, 159–193, 194–228, 229–259, 260–294, 295–326, 327–361, 367–389, 390–425, and 426–457; these read NLGI…MSKR, SPFA…GVKP, DRFT…GFGY, DVYV…IPHK, DYVS…GIEP, DKVA…GMEW, ELSV…DTVS, SAHS…NAKP, DGIT…GIDP, and KMEH…MGLE. Residues 462–527 are type E motif; degenerate; the sequence is VWGALLYACY…QMMVDRGLET (66 aa).

This sequence belongs to the PPR family. PCMP-E subfamily.

The protein localises to the plastid. It localises to the chloroplast. This Arabidopsis thaliana (Mouse-ear cress) protein is Pentatricopeptide repeat-containing protein At4g25270, chloroplastic (PCMP-E53).